The chain runs to 859 residues: Ribose import ATP-binding protein RbsA 1 (859 aa).

Residues 1–351 (MRASLENGDD…AARAPDEASE (351 aa)) form a disordered region. The segment at 1–353 (MRASLENGDD…RAPDEASEEA (353 aa)) is unknown. Basic and acidic residues predominate over residues 8-17 (GDDHDAHRLV). A compositionally biased stretch (basic residues) spans 28 to 43 (RAARRRAFARARRGER). Composition is skewed to basic and acidic residues over residues 44-80 (RARG…DRRA), 89-129 (RREQ…EEGG), and 137-167 (RERE…EGDR). Over residues 168-179 (RRRRSRDPRRHP) the composition is skewed to basic residues. Basic and acidic residues-rich tracts occupy residues 193–214 (GARE…GARE), 239–250 (RLDGRAVRDRGV), 263–281 (AGGD…RDVR), 288–301 (DSPR…EEVG), and 308–323 (DSGR…REDV). 2 consecutive ABC transporter domains span residues 358–594 (LALT…VGRR) and 607–851 (RDAA…TSDV). 390-397 (GENGAGKS) is a binding site for ATP.

The protein belongs to the ABC transporter superfamily. Ribose importer (TC 3.A.1.2.1) family. As to quaternary structure, the complex is composed of an ATP-binding protein (RbsA), two transmembrane proteins (RbsC) and a solute-binding protein (RbsB).

The protein localises to the cell inner membrane. The catalysed reaction is D-ribose(out) + ATP + H2O = D-ribose(in) + ADP + phosphate + H(+). Part of the ABC transporter complex RbsABC involved in ribose import. Responsible for energy coupling to the transport system. This is Ribose import ATP-binding protein RbsA 1 from Burkholderia pseudomallei (strain 1710b).